The following is a 367-amino-acid chain: uncharacterized protein (367 aa).

This sequence belongs to the mimivirus L17x/L18x family.

This is an uncharacterized protein from Acanthamoeba polyphaga mimivirus (APMV).